The sequence spans 775 residues: ATP-dependent 6-phosphofructokinase 2 (775 aa).

The segment at 1-390 is N-terminal catalytic PFK domain 1; it reads MTNTILDTYS…YHSAYRHLNT (390 aa). Residues glycine 25, 88–89, and 118–121 contribute to the ATP site; these read RC and GDGS. Mg(2+) is bound at residue aspartate 119. Residues 164–166, arginine 201, 208–210, glutamate 264, arginine 292, and 298–301 contribute to the substrate site; these read SID, MGR, and HIQR. Catalysis depends on aspartate 166, which acts as the Proton acceptor. The interval 391-404 is interdomain linker; sequence SDHPKMVLPEDKRM. Residues 405 to 775 are C-terminal regulatory PFK domain 2; the sequence is RVAIIHVGAP…GRSSLYAIPN (371 aa). Residues 537 to 541, 582 to 584, aspartate 640, and 672 to 675 contribute to the beta-D-fructose 2,6-bisphosphate site; these read SMSNN, QGA, and HFQQ.

It belongs to the phosphofructokinase type A (PFKA) family. ATP-dependent PFK group I subfamily. Eukaryotic two domain clade 'E' sub-subfamily. In terms of assembly, homotetramer. Requires Mg(2+) as cofactor.

Its subcellular location is the cytoplasm. It catalyses the reaction beta-D-fructose 6-phosphate + ATP = beta-D-fructose 1,6-bisphosphate + ADP + H(+). It functions in the pathway carbohydrate degradation; glycolysis; D-glyceraldehyde 3-phosphate and glycerone phosphate from D-glucose: step 3/4. With respect to regulation, allosterically activated by ADP, AMP, or fructose 2,6-bisphosphate, and allosterically inhibited by ATP or citrate. Its function is as follows. Catalyzes the phosphorylation of D-fructose 6-phosphate to fructose 1,6-bisphosphate by ATP, the first committing step of glycolysis. This Aspergillus oryzae (strain ATCC 42149 / RIB 40) (Yellow koji mold) protein is ATP-dependent 6-phosphofructokinase 2 (pfkB).